Here is a 45-residue protein sequence, read N- to C-terminus: Iota-conotoxin-like R11.13 (45 aa).

4 disulfides stabilise this stretch: Cys5/Cys19, Cys12/Cys22, Cys18/Cys27, and Cys21/Cys36. Leu43 bears the D-leucine mark. Residue Arg45 is a propeptide, removed by a carboxypeptidase.

The protein belongs to the conotoxin I1 superfamily. In terms of tissue distribution, expressed by the venom duct.

It localises to the secreted. Its function is as follows. Iota-conotoxins bind to voltage-gated sodium channels (Nav) and act as agonists by shifting the voltage-dependence of activation to more hyperpolarized levels. Produces general excitatory symptoms. This chain is Iota-conotoxin-like R11.13, found in Conus radiatus (Rayed cone).